Reading from the N-terminus, the 295-residue chain is Light-independent protochlorophyllide reductase iron-sulfur ATP-binding protein (295 aa).

Residues 39-44 (GIGKST) and Lys-68 contribute to the ATP site. Ser-43 contacts Mg(2+). Cys-124 and Cys-158 together coordinate [4Fe-4S] cluster. ATP-binding positions include 209-210 (NR) and 233-235 (PDL).

This sequence belongs to the NifH/BchL/ChlL family. As to quaternary structure, homodimer. Protochlorophyllide reductase is composed of three subunits; BchL, BchN and BchB. The cofactor is [4Fe-4S] cluster.

The catalysed reaction is chlorophyllide a + oxidized 2[4Fe-4S]-[ferredoxin] + 2 ADP + 2 phosphate = protochlorophyllide a + reduced 2[4Fe-4S]-[ferredoxin] + 2 ATP + 2 H2O. It functions in the pathway porphyrin-containing compound metabolism; bacteriochlorophyll biosynthesis (light-independent). Its function is as follows. Component of the dark-operative protochlorophyllide reductase (DPOR) that uses Mg-ATP and reduced ferredoxin to reduce ring D of protochlorophyllide (Pchlide) to form chlorophyllide a (Chlide). This reaction is light-independent. The L component serves as a unique electron donor to the NB-component of the complex, and binds Mg-ATP. This Rhodospirillum rubrum (strain ATCC 11170 / ATH 1.1.1 / DSM 467 / LMG 4362 / NCIMB 8255 / S1) protein is Light-independent protochlorophyllide reductase iron-sulfur ATP-binding protein.